Here is a 499-residue protein sequence, read N- to C-terminus: Interferon regulatory factor 5 (499 aa).

Positions 12 to 18 (PRRVRLK) match the Nuclear localization signal motif. A DNA-binding region (IRF tryptophan pentad repeat) is located at residues 14 to 122 (RVRLKPWLVA…QPYKVYEVCS (109 aa)). Positions 121–142 (CSNGPAPAESQPSEDNAEEEEE) are disordered. Residues 145–155 (LQKMLPGLSIT) carry the Nuclear export signal motif. Residues Ser-153 and Ser-294 each carry the phosphoserine; by TBK1 modification. Position 302 is a phosphoserine (Ser-302). Residues Lys-412 and Lys-413 each participate in a glycyl lysine isopeptide (Lys-Gly) (interchain with G-Cter in ubiquitin) cross-link. Phosphoserine occurs at positions 432, 436, 438, 441, and 447.

It belongs to the IRF family. In terms of assembly, homodimer, when phosphorylated. Interacts with TASL (via pLxIS motif); interaction takes place downstream of TLR7, TLR8 or TLR9, leading to its activation. Interacts with MYD88 and TRAF6. Phosphorylation of serine and threonine residues by IKBKB in a C-terminal autoinhibitory region, stimulates dimerization, transport into the nucleus, assembly with the coactivator CBP/EP300 and initiation of transcription. Post-translationally, 'Lys-63'-linked polyubiquitination by TRAF6 is required for activation.

It is found in the cytoplasm. The protein localises to the nucleus. Maintained as a monomer in an autoinhibited state. Phosphorylation and activation follow the following steps: innate adapter protein TASL recruits IRF5, thereby licensing IRF5 for phosphorylation by IKBKB. Phosphorylated IRF5 dissociates from the adapter proteins, dimerizes, and then enters the nucleus to induce IFNs. Transcription factor that plays a critical role in innate immunity by activating expression of type I interferon (IFN) IFNA and INFB and inflammatory cytokines downstream of endolysosomal toll-like receptors TLR7, TLR8 and TLR9. Regulates the transcription of type I IFN genes (IFN-alpha and IFN-beta) and IFN-stimulated genes (ISG) by binding to an interferon-stimulated response element (ISRE) in their promoters. Can efficiently activate both the IFN-beta (IFNB) and the IFN-alpha (IFNA) genes and mediate their induction downstream of the TLR-activated, MyD88-dependent pathway. The chain is Interferon regulatory factor 5 from Bos taurus (Bovine).